We begin with the raw amino-acid sequence, 204 residues long: LexA repressor (204 aa).

Positions 28-48 form a DNA-binding region, H-T-H motif; the sequence is RAEIANRLGFKSANAAEEHLK. Residues Ser-121 and Lys-158 each act as for autocatalytic cleavage activity in the active site.

This sequence belongs to the peptidase S24 family. As to quaternary structure, homodimer.

It carries out the reaction Hydrolysis of Ala-|-Gly bond in repressor LexA.. In terms of biological role, represses a number of genes involved in the response to DNA damage (SOS response), including recA and lexA. In the presence of single-stranded DNA, RecA interacts with LexA causing an autocatalytic cleavage which disrupts the DNA-binding part of LexA, leading to derepression of the SOS regulon and eventually DNA repair. The protein is LexA repressor of Shewanella frigidimarina (strain NCIMB 400).